The chain runs to 446 residues: Eukaryotic translation initiation factor 3 subunit E (446 aa).

The region spanning 256-425 is the PCI domain; sequence TDLFFSPAYI…GTVIMNHPPQ (170 aa).

Belongs to the eIF-3 subunit E family. Component of the eukaryotic translation initiation factor 3 (eIF-3) complex.

It localises to the cytoplasm. Component of the eukaryotic translation initiation factor 3 (eIF-3) complex, which is involved in protein synthesis of a specialized repertoire of mRNAs and, together with other initiation factors, stimulates binding of mRNA and methionyl-tRNAi to the 40S ribosome. The eIF-3 complex specifically targets and initiates translation of a subset of mRNAs involved in cell proliferation. This is Eukaryotic translation initiation factor 3 subunit E (int6) from Aspergillus terreus (strain NIH 2624 / FGSC A1156).